The sequence spans 253 residues: 5'-nucleotidase SurE (253 aa).

A divalent metal cation-binding residues include D8, D9, S39, and N91.

The protein belongs to the SurE nucleotidase family. A divalent metal cation serves as cofactor.

The protein resides in the cytoplasm. It carries out the reaction a ribonucleoside 5'-phosphate + H2O = a ribonucleoside + phosphate. Functionally, nucleotidase that shows phosphatase activity on nucleoside 5'-monophosphates. The polypeptide is 5'-nucleotidase SurE (Albidiferax ferrireducens (strain ATCC BAA-621 / DSM 15236 / T118) (Rhodoferax ferrireducens)).